The primary structure comprises 213 residues: tRNA (guanine-N(7)-)-methyltransferase (213 aa).

S-adenosyl-L-methionine is bound by residues aspartate 44, glutamate 69, asparagine 96, and aspartate 119. Aspartate 119 is a catalytic residue. Substrate contacts are provided by lysine 123 and aspartate 155.

It belongs to the class I-like SAM-binding methyltransferase superfamily. TrmB family.

It carries out the reaction guanosine(46) in tRNA + S-adenosyl-L-methionine = N(7)-methylguanosine(46) in tRNA + S-adenosyl-L-homocysteine. Its pathway is tRNA modification; N(7)-methylguanine-tRNA biosynthesis. Functionally, catalyzes the formation of N(7)-methylguanine at position 46 (m7G46) in tRNA. This is tRNA (guanine-N(7)-)-methyltransferase from Thermosynechococcus vestitus (strain NIES-2133 / IAM M-273 / BP-1).